Here is a 142-residue protein sequence, read N- to C-terminus: Hemoglobin subunit alpha-A (142 aa).

The Globin domain maps to 2–142 (VLSAADKTNV…VGTVLTAKYR (141 aa)). H59 is a binding site for O2. Residue H88 participates in heme b binding.

The protein belongs to the globin family. In terms of assembly, heterotetramer of two alpha chains and two beta chains. Red blood cells.

Functionally, involved in oxygen transport from the lung to the various peripheral tissues. This Coturnix japonica (Japanese quail) protein is Hemoglobin subunit alpha-A (HBAA).